Here is a 409-residue protein sequence, read N- to C-terminus: MASVGIEPSAAVRESTGNVTDADRLPEEMKDMKIQDDKEMEATIVNGNVTETGHIIVTTIGGRNGQPKQTISYMAERVVGHGSFGVVFQAKCLETGETVAIKKVLQDRRYKNRELQTMRLLDHPNVVSLKHCFFSTTEKDELYLNLVLEYVPETVHRVIKHYNKLNQRMPLVYVKLYTYQIFRSLSYIHRCIGVCHRDIKPQNLLVNPHTHQVKLCDFGSAKVLVKGEPNISYICSRYYRAPELIFGATEYTTAIDVWSAGCVLAELLLGQPLFPGESGVDQLVEIIKVLGTPTREEIKCMNPNYTEFKFPQIKAHPWHKIFHKRMPPEAVDLVSRLLQYSPNLRCAALDSLVHPFFDELRDPNARLPNGRFLPPLFNFKPHELKGVPVEMVAKLVPEHARKQCPWLSL.

Ala-2 is subject to N-acetylalanine. The Protein kinase domain occupies 73–357 (YMAERVVGHG…ALDSLVHPFF (285 aa)). Residues 79-87 (VGHGSFGVV) and Lys-102 contribute to the ATP site. Asp-198 serves as the catalytic Proton acceptor. Tyr-233 is modified (phosphotyrosine).

Belongs to the protein kinase superfamily. CMGC Ser/Thr protein kinase family. GSK-3 subfamily. In terms of assembly, binds to KIB1. Component of a complex made of POLAR, BASL, ASK7/BIN2 and ASK3/SK12. Binds to POLAR and BASL. Autophosphorylated mainly on threonine and serine residues. As to expression, roots, shoots and leaves.

Its subcellular location is the cytoplasm. It localises to the cell cortex. It carries out the reaction L-seryl-[protein] + ATP = O-phospho-L-seryl-[protein] + ADP + H(+). The catalysed reaction is L-threonyl-[protein] + ATP = O-phospho-L-threonyl-[protein] + ADP + H(+). Its function is as follows. May mediate extracellular signals to regulate transcription in differentiating cells. Probably involved first at the cortical polarity site, to restrict MAPK signaling and promote asymmetric cell division (ACD), and second in the nucleus of stomatal lineage ground cells (SLGCs) or meristemoids, to limit cell division and to promote differentiation into pavement or stomatal guard cells, respectively. Phosphorylate YDA and SPCH in vitro. The sequence is that of Shaggy-related protein kinase gamma from Arabidopsis thaliana (Mouse-ear cress).